Here is a 927-residue protein sequence, read N- to C-terminus: Probable RNA-dependent RNA polymerase 4 (927 aa).

The disordered stretch occupies residues 98 to 135 (GESPVQFPRTPGKKSCRASQAEVSLDREDPSPKFLRGD). Over residues 121-135 (SLDREDPSPKFLRGD) the composition is skewed to basic and acidic residues.

The protein belongs to the RdRP family.

It carries out the reaction RNA(n) + a ribonucleoside 5'-triphosphate = RNA(n+1) + diphosphate. Its function is as follows. Probably involved in the RNA silencing pathway and required for the generation of small interfering RNAs (siRNAs). In Arabidopsis thaliana (Mouse-ear cress), this protein is Probable RNA-dependent RNA polymerase 4 (RDR4).